The following is a 137-amino-acid chain: Putative pre-16S rRNA nuclease (137 aa).

It belongs to the YqgF nuclease family.

Its subcellular location is the cytoplasm. In terms of biological role, could be a nuclease involved in processing of the 5'-end of pre-16S rRNA. This Anaeromyxobacter sp. (strain K) protein is Putative pre-16S rRNA nuclease.